We begin with the raw amino-acid sequence, 488 residues long: Alkaline nuclease (488 aa).

The protein belongs to the herpesviridae alkaline nuclease family. As to quaternary structure, interacts with major DNA-binding protein; this interaction increases the nuclease processivity of the alkaline exonuclease.

It is found in the host nucleus. The protein localises to the host cytoplasm. Functionally, plays a role in processing non linear or branched viral DNA intermediates in order to promote the production of mature packaged unit-length linear progeny viral DNA molecules. Exhibits endonuclease and exonuclease activities and accepts both double-stranded and single-stranded DNA as substrate. Exonuclease digestion of DNA is in the 5'-&gt; 3' direction and the products are 5'-monophosphate nucleosides. Additionally, forms a recombinase with the major DNA-binding protein, which displays strand exchange activity. The chain is Alkaline nuclease (U70) from Homo sapiens (Human).